The following is a 1513-amino-acid chain: Lid2 complex component lid2 (1513 aa).

Residues 56–97 (GLSVQLNASNMTDPFKFLLDNWHTIFKNGAIKLLPPEGWQIP) enclose the JmjN domain. Residues 121–212 (YEKNYDYFKK…YIKPFERDSS (92 aa)) form the ARID domain. Residues 211–253 (SSPSFKSKRSESSTRKIRNTRSSAQQESPIPETSAQSPVQTIQ) form a disordered region. Residues 230–253 (TRSSAQQESPIPETSAQSPVQTIQ) are compositionally biased toward polar residues. The PHD-type 1 zinc finger occupies 268–318 (GEQCEYCGLDKNPETILLCDGCEAAYHTSCLDPPLTSIPKEDWYCDACKFN). Residues 408–574 (KYSSEPWNLH…DGLLNSSISV (167 aa)) enclose the JmjC domain. Ser722 carries the post-translational modification Phosphoserine. Positions 1063–1086 (LSLNDRPGPPMEPASRETSPDSEG) are disordered. A compositionally biased stretch (basic and acidic residues) spans 1076–1086 (ASRETSPDSEG). The PHD-type 2 zinc-finger motif lies at 1093 to 1145 (KKGCIFCFCRLPESGVMIECEICHEWYHAKCLKMSKKKLRQDEKFTCPICDYR). The RING-type 1; degenerate zinc finger occupies 1096 to 1143 (CIFCFCRLPESGVMIECEICHEWYHAKCLKMSKKKLRQDEKFTCPICD). 2 disordered regions span residues 1244-1268 (APNPPPIIGESKSTRKPRPTKRQRQ) and 1280-1327 (ASAI…NNKN). The span at 1257 to 1268 (TRKPRPTKRQRQ) shows a compositional bias: basic residues. Residues 1301 to 1313 (VEAETKSKSEKSP) are compositionally biased toward basic and acidic residues. A compositionally biased stretch (polar residues) spans 1316 to 1326 (NGTNISDANNK). The PHD-type 3 zinc finger occupies 1352–1403 (NSSCLCGEEFSPRDSFIDCTICERRFHYDCVGLNNEIADSVSKFTCPICMEQ). An RING-type 2; degenerate zinc finger spans residues 1354–1401 (SCLCGEEFSPRDSFIDCTICERRFHYDCVGLNNEIADSVSKFTCPICM).

In terms of assembly, component of the Lid2 complex composed of ash2, jmj3, lid2, sdc1 and snt2.

The protein resides in the nucleus. The sequence is that of Lid2 complex component lid2 (lid2) from Schizosaccharomyces pombe (strain 972 / ATCC 24843) (Fission yeast).